The primary structure comprises 739 residues: Eukaryotic translation initiation factor 3 subunit B (739 aa).

Residues methionine 1–serine 98 form a sufficient for interaction with HCR1 and TIF32 region. The interval methionine 1 to phenylalanine 224 is sufficient for interaction with PIC8. One can recognise an RRM domain in the interval asparagine 37–aspartate 124. WD repeat units follow at residues proline 190–arginine 229, phenylalanine 231–alanine 293, glutamine 301–aspartate 339, valine 343–arginine 385, glutamate 453–valine 502, isoleucine 537–lysine 579, and aspartate 592–threonine 630.

The protein belongs to the eIF-3 subunit B family. In terms of assembly, component of the eukaryotic translation initiation factor 3 (eIF-3) complex.

It localises to the cytoplasm. In terms of biological role, RNA-binding component of the eukaryotic translation initiation factor 3 (eIF-3) complex, which is involved in protein synthesis of a specialized repertoire of mRNAs and, together with other initiation factors, stimulates binding of mRNA and methionyl-tRNAi to the 40S ribosome. The eIF-3 complex specifically targets and initiates translation of a subset of mRNAs involved in cell proliferation. The chain is Eukaryotic translation initiation factor 3 subunit B from Candida albicans (strain SC5314 / ATCC MYA-2876) (Yeast).